The sequence spans 269 residues: Troponin T, fast skeletal muscle (269 aa).

Acidic residues predominate over residues 1 to 23 (MSDEEVEQVEEQYEEEEEAQEEA). The segment at 1 to 72 (MSDEEVEQVE…EKVDFDDIQK (72 aa)) is disordered. Ser-2 is modified (N-acetylserine). Ser-2 is subject to Phosphoserine. Residues 24 to 34 (AEVHEEVHEPE) show a composition bias toward basic and acidic residues. Residues 35–47 (EVQEDTAEEDAEE) show a composition bias toward acidic residues. Residues 60-72 (PEGEKVDFDDIQK) show a composition bias toward basic and acidic residues. Ser-88 carries the post-translational modification Phosphoserine. The span at 111-153 (RAERAEQQRIRAEKERERQNRLAEEKARREEEDAKRRAEDDLK) shows a compositional bias: basic and acidic residues. Residues 111–158 (RAERAEQQRIRAEKERERQNRLAEEKARREEEDAKRRAEDDLKKKKAL) are disordered. Phosphoserine occurs at positions 159, 166, and 167. Positions 245–269 (RIDQAQKHSKKAGTPAKGKVGGRWK) are disordered.

The protein belongs to the troponin T family. In terms of tissue distribution, in fetal and adult fast skeletal muscles, with a higher level expression in fetal than in adult muscle.

In terms of biological role, troponin T is the tropomyosin-binding subunit of troponin, the thin filament regulatory complex which confers calcium-sensitivity to striated muscle actomyosin ATPase activity. This Homo sapiens (Human) protein is Troponin T, fast skeletal muscle (TNNT3).